Consider the following 87-residue polypeptide: MANIKSAQKRAVQSEKRRQHNASQRSMMRTFIKKVYAAVATGDKAASEAAFVEMQKVVDRMASKGLIHANKAANHKSKLAAQIKKLA.

The tract at residues 1-26 (MANIKSAQKRAVQSEKRRQHNASQRS) is disordered.

This sequence belongs to the bacterial ribosomal protein bS20 family.

Its function is as follows. Binds directly to 16S ribosomal RNA. The polypeptide is Small ribosomal subunit protein bS20 (Glaesserella parasuis serovar 5 (strain SH0165) (Haemophilus parasuis)).